Reading from the N-terminus, the 186-residue chain is Superoxide dismutase [Cu-Zn] (186 aa).

Positions 1-22 are cleaved as a signal peptide; that stretch reads MNMKTLLALAVSAVCSVSVAQA. Cu cation-binding residues include His79, His81, and His104. The cysteines at positions 86 and 182 are disulfide-linked. His104, His113, His122, and Asp125 together coordinate Zn(2+). Residue His160 coordinates Cu cation.

It belongs to the Cu-Zn superoxide dismutase family. As to quaternary structure, homodimer. It depends on Cu cation as a cofactor. Requires Zn(2+) as cofactor.

It localises to the periplasm. It catalyses the reaction 2 superoxide + 2 H(+) = H2O2 + O2. Destroys radicals which are normally produced within the cells and which are toxic to biological systems. This is Superoxide dismutase [Cu-Zn] (sodC) from Neisseria meningitidis serogroup A / serotype 4A (strain DSM 15465 / Z2491).